Reading from the N-terminus, the 367-residue chain is GTP cyclohydrolase FolE2 (367 aa).

The protein belongs to the GTP cyclohydrolase IV family.

It carries out the reaction GTP + H2O = 7,8-dihydroneopterin 3'-triphosphate + formate + H(+). The protein operates within cofactor biosynthesis; 7,8-dihydroneopterin triphosphate biosynthesis; 7,8-dihydroneopterin triphosphate from GTP: step 1/1. Functionally, converts GTP to 7,8-dihydroneopterin triphosphate. This is GTP cyclohydrolase FolE2 from Dinoroseobacter shibae (strain DSM 16493 / NCIMB 14021 / DFL 12).